The primary structure comprises 244 residues: MATAGITAAIDDLVISRIDEAITNNTLVQRLRKKVSSLWKDYDAHVSDPTAHELLTMPAALADLPPPPPPTDDEINRSFYATALPSVVPTSDTLWGTASYEIIGRAVRIASSDKAPRLILHVTDETIRLEVPTMSFTLASPLSTGSLLRVTLPRGAIHSSLTGKFDERCWVRLLSTLTKWSTPSTMVTSDWTLDTTTGLTKPPVTGFNARATVKDSAIVMWFPAPDIATSARRAIVSPMSCVFE.

This sequence belongs to the aquareoviridae NS3 protein family.

This chain is Non-structural protein 3 (S11), found in Notemigonus crysoleucas (Golden shiner).